The primary structure comprises 119 residues: Protein ELF4-LIKE 2 (119 aa).

Positions 91-119 (SVDASSEGESTGTLKSDGKANNQKRFRSG) are disordered. Residues 93 to 111 (DASSEGESTGTLKSDGKAN) are compositionally biased toward polar residues.

The protein belongs to the EARLY FLOWERING 4 family. As to quaternary structure, homodimer.

The protein localises to the nucleus. In terms of biological role, component of the central CCA1/LHY-TOC1 feedback loop in the circadian clock that promotes clock accuracy and is required for sustained rhythms in the absence of daily light/dark cycles. This chain is Protein ELF4-LIKE 2 (EFL2), found in Arabidopsis thaliana (Mouse-ear cress).